A 361-amino-acid polypeptide reads, in one-letter code: N-methyltransferase benX (361 aa).

Belongs to the methyltransferase superfamily.

The protein operates within secondary metabolite biosynthesis. N-methyltransferase; part of the gene cluster that mediates the biosynthesis of benzomalvin A and D. The pathway begins with the loading of amino acid precursors onto the A domains of the non ribosomal peptide synthetases benY and benZ. BenY and the A1 domain of benZ are loaded with anthranilate (Anth), while the A2 domain of benZ is loaded with phenylalanine (Phe). N-methylation of Phe by the methyltransferase benX may happen before loading of Phe onto benZ, after loading of Phe, or after dipeptide formation. Condensation of Anth with the secondary amine of NmPhe or Phe is catalyzed by the C1 domain of benZ, forming a dipeptide intermediate. This is followed by in trans condensation of the Anth-NmPhe dipeptide with Anth bound to the T domain of benY by the C2 domain of benZ to form the linear tripeptide Anth-NmPhe-Anth. Cyclization and release of the tripeptide is then catalyzed by the C-terminal C domain of benY and the resulting 11-member macrocyclic intermediate is expected to spontaneously collapse to form the benzodiazepine core. Benzomalvin A is in conformational equilibrium with its atropisomer, benzomalvin D. This Aspergillus terreus protein is N-methyltransferase benX.